Reading from the N-terminus, the 425-residue chain is MTAIIDIVGREILDSRGNPTVEVDVVLEDGSFGRAAVPSGASTGAHEAVELRDGGSRYLGKGVEKAVEAVNGKIFDAIAGMDAESQLLIDQTMIELDGSANKGNIGANAILGVSLAVAKAAAQATGLPLYRYVGGANAHVLPVPMMNIINGGAHADNPIDFQEFMILPVGASSVREAVRYGSEVFHTLKKRLKDAGHNTNVGDEGGFAPNLKNAQAALDFIMESIEKAGFKPGEDIALGLDCAATEFFKDGNYVYEGERKTRDPKAQAKYLAKLASDYPIVTIEDGMAEDDWEGWKYLTDLIGDKCQLVGDDLFVTNSARLRDGIRMGVANSILVKVNQIGSLSETLDAVETAHKAGYTAVMSHRSGETEDSTIADLAVATNCGQIKTGSLARSDRTAKYNQLIRIEEELGKQARYAGRNALKFL.

Q162 contacts (2R)-2-phosphoglycerate. E204 acts as the Proton donor in catalysis. Mg(2+)-binding residues include D241, E284, and D311. Residues K336, R365, S366, and K387 each coordinate (2R)-2-phosphoglycerate. Catalysis depends on K336, which acts as the Proton acceptor.

Belongs to the enolase family. Mg(2+) is required as a cofactor.

It is found in the cytoplasm. Its subcellular location is the secreted. The protein localises to the cell surface. It carries out the reaction (2R)-2-phosphoglycerate = phosphoenolpyruvate + H2O. It functions in the pathway carbohydrate degradation; glycolysis; pyruvate from D-glyceraldehyde 3-phosphate: step 4/5. Catalyzes the reversible conversion of 2-phosphoglycerate (2-PG) into phosphoenolpyruvate (PEP). It is essential for the degradation of carbohydrates via glycolysis. The sequence is that of Enolase from Brucella anthropi (strain ATCC 49188 / DSM 6882 / CCUG 24695 / JCM 21032 / LMG 3331 / NBRC 15819 / NCTC 12168 / Alc 37) (Ochrobactrum anthropi).